Here is a 201-residue protein sequence, read N- to C-terminus: Adenylyl-sulfate kinase (201 aa).

An ATP-binding site is contributed by 35 to 42 (GLSGSGKS). Ser-109 acts as the Phosphoserine intermediate in catalysis.

It belongs to the APS kinase family.

The enzyme catalyses adenosine 5'-phosphosulfate + ATP = 3'-phosphoadenylyl sulfate + ADP + H(+). The protein operates within sulfur metabolism; hydrogen sulfide biosynthesis; sulfite from sulfate: step 2/3. Functionally, catalyzes the synthesis of activated sulfate. The protein is Adenylyl-sulfate kinase of Salmonella gallinarum (strain 287/91 / NCTC 13346).